A 267-amino-acid polypeptide reads, in one-letter code: MRYIIILAVLFINSIHAKITSYKFESVNFDSKIEWTGDGLYNISLKNYGIKTWQTMYTNVPEGTYDISGFPKNDFVSFWVKFEQGDYKVEEYCTGLCVEVKIGPPTVILTEYDDHINLFIEHPYATRGSKKIPIYKRGDMCDIYLLYTANFTFGDSEEPVTYDIDDYDCTSTGCSIDFATTEKVCVTAQGATEGFLEKITPWSSEVCLTPKKNVYTCAIRSKEDVPNFKDKIARVITRKFNKQSQSYLTKFLGSTSNDVTTFLSILD.

The first 17 residues, 1–17 (MRYIIILAVLFINSIHA), serve as a signal peptide directing secretion. N-linked (GlcNAc...) asparagine; by host glycosylation is found at Asn42 and Asn150.

The protein belongs to the type II cytokine receptor family. In terms of assembly, homodimer. Interacts with host IFNG.

Its subcellular location is the secreted. Functionally, counteracts the antiviral effects of host IFN-gamma. Acts as a soluble IFN-gamma receptor and thus inhibits the interaction between host IFN-gamma and its receptor. This Cynomys gunnisoni (Gunnison's prairie dog) protein is Soluble interferon gamma receptor OPG193 (OPG193).